A 136-amino-acid chain; its full sequence is Small ribosomal subunit protein uS11 (136 aa).

2 disordered regions span residues 1–20 (MAQR…NVTN) and 115–136 (VTPQ…EKAR). Over residues 125–136 (PPKRVLKREKAR) the composition is skewed to basic residues.

It belongs to the universal ribosomal protein uS11 family. Part of the 30S ribosomal subunit. Interacts with proteins S7 and S18. Binds to IF-3.

In terms of biological role, located on the platform of the 30S subunit, it bridges several disparate RNA helices of the 16S rRNA. Forms part of the Shine-Dalgarno cleft in the 70S ribosome. This Mycoplasmopsis pulmonis (strain UAB CTIP) (Mycoplasma pulmonis) protein is Small ribosomal subunit protein uS11.